A 338-amino-acid chain; its full sequence is Heat-inducible transcription repressor HrcA (338 aa).

This sequence belongs to the HrcA family.

In terms of biological role, negative regulator of class I heat shock genes (grpE-dnaK-dnaJ and groELS operons). Prevents heat-shock induction of these operons. The protein is Heat-inducible transcription repressor HrcA of Streptomyces albus G.